Here is a 315-residue protein sequence, read N- to C-terminus: Zinc finger protein 691 (315 aa).

Polar residues predominate over residues 1–10 (MSLCSPTHSA). Residues 1-90 (MSLCSPTHSA…QETHPKKPWQ (90 aa)) form a disordered region. Basic and acidic residues predominate over residues 33–58 (GSEKEQSPEPHLPEEGEGGKPWRVDD). Phosphoserine occurs at positions 39, 75, and 77. Lys-113 is covalently cross-linked (Glycyl lysine isopeptide (Lys-Gly) (interchain with G-Cter in SUMO2)). 7 C2H2-type zinc fingers span residues 115 to 137 (FICA…QRIH), 143 to 165 (YKCS…ERIH), 171 to 193 (YKCP…QQDH), 199 to 221 (YRCD…HRTH), 227 to 249 (YICC…HRTH), 255 to 277 (YECT…QRTH), and 283 to 305 (YRCT…QKTH).

This sequence belongs to the krueppel C2H2-type zinc-finger protein family.

The protein localises to the nucleus. Its function is as follows. May be involved in transcriptional regulation. The polypeptide is Zinc finger protein 691 (ZNF691) (Homo sapiens (Human)).